A 692-amino-acid polypeptide reads, in one-letter code: Highly divergent homeobox (692 aa).

The homeobox 1 DNA-binding region spans 3 to 63 (LRSVFTVEQQ…NKRRKMSSKS (61 aa)). Polar residues predominate over residues 117–133 (SSSSKQGTTKHTNTQIT). The interval 117–136 (SSSSKQGTTKHTNTQITEAH) is disordered. Glycyl lysine isopeptide (Lys-Gly) (interchain with G-Cter in SUMO2) cross-links involve residues Lys137, Lys142, Lys146, Lys165, Lys174, Lys196, Lys214, Lys223, and Lys234. A DNA-binding region (homeobox 2) is located at residues 437–500 (ALQDRTQFSD…NRRRKYRLMG (64 aa)). Disordered stretches follow at residues 505 to 541 (PPRGGPADFSEQPESGSLSALTPGEEAGPEVGEDNDR) and 647 to 692 (KDQQ…SDSL). A compositionally biased stretch (polar residues) spans 676 to 692 (TSLSVSSLSEKNASDSL).

It localises to the nucleus. The sequence is that of Highly divergent homeobox (Hdx) from Mus musculus (Mouse).